Consider the following 925-residue polypeptide: Colossin-D (925 aa).

A signal peptide spans 1–26 (MIKVFKDLKFLILITIILLNLKSINC). N-linked (GlcNAc...) asparagine glycans are attached at residues Asn-47, Asn-95, Asn-142, Asn-166, Asn-283, Asn-334, Asn-344, Asn-378, Asn-401, Asn-511, and Asn-642.

The protein belongs to the serine-aspartate repeat-containing protein (SDr) family.

The protein resides in the secreted. This is Colossin-D (colD) from Dictyostelium discoideum (Social amoeba).